The sequence spans 129 residues: Cytochrome c-type protein SHP (129 aa).

An N-terminal signal peptide occupies residues 1 to 17; that stretch reads MTRFLILSAVLAGPALA. Heme c contacts are provided by Cys60, Cys63, and His64. Cysteines 106 and 114 form a disulfide.

Post-translationally, binds 1 heme c group covalently per subunit.

High-spin cytochrome. Transiently bind oxygen during autoxidation, which occurs with a half-life of 3 minutes with a 4-fold excess of O(2). Also binds carbon monoxide, azide and cyanide. This is Cytochrome c-type protein SHP (shp) from Cereibacter sphaeroides (strain ATCC 17023 / DSM 158 / JCM 6121 / CCUG 31486 / LMG 2827 / NBRC 12203 / NCIMB 8253 / ATH 2.4.1.) (Rhodobacter sphaeroides).